A 1225-amino-acid chain; its full sequence is uncharacterized protein (1225 aa).

An N-terminal signal peptide occupies residues 1–27; the sequence is MKRFLHRVKWPLLLSSIAVSLGIVAVA. A lipid anchor (N-palmitoyl cysteine) is attached at cysteine 28. Cysteine 28 carries the S-diacylglycerol cysteine lipid modification. A disordered region spans residues 995–1014; it reads QSEKSSSNGGQAQLQSTQSS.

This sequence belongs to the MG307/MG309/MG338 family.

The protein resides in the cell membrane. This is an uncharacterized protein from Mycoplasma genitalium (strain ATCC 33530 / DSM 19775 / NCTC 10195 / G37) (Mycoplasmoides genitalium).